The chain runs to 320 residues: Ribosome biogenesis protein BRX1 homolog 2 (320 aa).

The segment at 1–40 (MGRKRKHSETEAPAPVKKSDEPAPDRPKRTLLGWKDKSEG) is disordered. A compositionally biased stretch (basic and acidic residues) spans 17–40 (KKSDEPAPDRPKRTLLGWKDKSEG). Residues 57–260 (EKVLVTCSRR…PIKIFAGSFG (204 aa)) enclose the Brix domain. Residues 297–320 (RKKMHELSNPLEPDEFADMWKDDE) form a disordered region. Positions 308 to 320 (EPDEFADMWKDDE) are enriched in acidic residues.

It belongs to the BRX1 family. As to expression, expressed in roots, rosette leaves, stems, flowers, siliques and seeds.

The protein resides in the nucleus. It localises to the nucleolus. In terms of biological role, involved in pre-rRNA processing and required for biogenesis of the large (60S) ribosomal subunit. Required for proper development. This Arabidopsis thaliana (Mouse-ear cress) protein is Ribosome biogenesis protein BRX1 homolog 2.